The sequence spans 347 residues: Phenylalanine--tRNA ligase alpha subunit (347 aa).

Position 262 (Glu-262) interacts with Mg(2+).

It belongs to the class-II aminoacyl-tRNA synthetase family. Phe-tRNA synthetase alpha subunit type 1 subfamily. In terms of assembly, tetramer of two alpha and two beta subunits. The cofactor is Mg(2+).

The protein resides in the cytoplasm. It catalyses the reaction tRNA(Phe) + L-phenylalanine + ATP = L-phenylalanyl-tRNA(Phe) + AMP + diphosphate + H(+). In Roseiflexus sp. (strain RS-1), this protein is Phenylalanine--tRNA ligase alpha subunit.